Here is a 129-residue protein sequence, read N- to C-terminus: MSGRGKQGGKARAKAKSRSSRAGLQFPVGRVHRLLRKGNYAERVGAGAPVYLAAVLEYLTAEILELAGNPARDNKKTRIIPRHLQLAIRNDEELNKLLGKVTIAQGGVLPNIQAVLLPKKTDSHKAKAK.

The interval 1 to 22 (MSGRGKQGGKARAKAKSRSSRA) is disordered. S2 bears the N-acetylserine mark. Phosphoserine is present on S2. At K6 the chain carries N6-(2-hydroxyisobutyryl)lysine. An N6-acetyllysine mark is found at K6 and K10. The segment covering 7-19 (QGGKARAKAKSRS) has biased composition (basic residues). The residue at position 10 (K10) is an N6-(2-hydroxyisobutyryl)lysine; alternate. K10 is modified (N6-lactoyllysine; alternate). At K10 the chain carries N6-succinyllysine. Residues K14 and K16 each participate in a glycyl lysine isopeptide (Lys-Gly) (interchain with G-Cter in ubiquitin) cross-link. K37 carries the N6-(2-hydroxyisobutyryl)lysine; alternate modification. Residues K75 and K76 each carry the N6-(2-hydroxyisobutyryl)lysine modification. K96 is modified (N6-(2-hydroxyisobutyryl)lysine; alternate). The residue at position 96 (K96) is an N6-succinyllysine. At K96 the chain carries N6-glutaryllysine; alternate. K100 bears the N6-glutaryllysine mark. An N5-methylglutamine modification is found at Q105. K119 is subject to N6-(2-hydroxyisobutyryl)lysine; alternate. N6-glutaryllysine; alternate occurs at positions 119 and 120. K120 participates in a covalent cross-link: Glycyl lysine isopeptide (Lys-Gly) (interchain with G-Cter in ubiquitin).

It belongs to the histone H2A family. The nucleosome is a histone octamer containing two molecules each of H2A, H2B, H3 and H4 assembled in one H3-H4 heterotetramer and two H2A-H2B heterodimers. The octamer wraps approximately 147 bp of DNA. Post-translationally, monoubiquitination of Lys-120 (H2AK119Ub) gives a specific tag for epigenetic transcriptional repression. Following DNA double-strand breaks (DSBs), it is ubiquitinated through 'Lys-63' linkage of ubiquitin moieties, leading to the recruitment of repair proteins to sites of DNA damage. H2AK119Ub and ionizing radiation-induced 'Lys-63'-linked ubiquitination are distinct events. In terms of processing, phosphorylation on Ser-2 is enhanced during mitosis. Phosphorylation on Ser-2 directly represses transcription. Glutamine methylation at Gln-105 (H2AQ104me) by FBL is specifically dedicated to polymerase I. It is present at 35S ribosomal DNA locus and impairs binding of the FACT complex.

The protein resides in the nucleus. Its subcellular location is the chromosome. Its function is as follows. Core component of nucleosome. Nucleosomes wrap and compact DNA into chromatin, limiting DNA accessibility to the cellular machineries which require DNA as a template. Histones thereby play a central role in transcription regulation, DNA repair, DNA replication and chromosomal stability. DNA accessibility is regulated via a complex set of post-translational modifications of histones, also called histone code, and nucleosome remodeling. The polypeptide is Histone H2A-III (Gallus gallus (Chicken)).